The primary structure comprises 478 residues: MLSDELESKPELLVQFVQNTSIPLGQGLVESEAKDITCLSLLPVTEASECSRLMLPDDTTNHSNSSKEVPSSAVLRSLRVNVGPDGEETRAQTVQKSPEFLSTSESSSLLQDLQPSDSTSFILLNLTRAGLGSSAEHLVFVQDEAEDSGNDFLSSESTDSSIPWFLRVQELAHDSLIAATRAQLAKNAKTSSNGENVHLGSGDGQSKDSGPLPQVEKKLKCTVEGCDRTFVWPAHFKYHLKTHRNDRSFICPAEGCGKSFYVLQRLKVHMRTHNGEKPFMCHESGCGKQFTTAGNLKNHRRIHTGEKPFLCEAQGCGRSFAEYSSLRKHLVVHSGEKPHQCQVCGKTFSQSGSRNVHMRKHHLQLGAAGSQEQEQTAEPLMGSSLLEEASVPSKNLVSMNSQPSLGGESLNLPNTNSILGVDDEVLAEGSPRSLSSVPDVTHHLVTMQSGRQSYEVSVLTAVNPQELLNQGDLTERRT.

Residues 187-213 (NAKTSSNGENVHLGSGDGQSKDSGPLP) form a disordered region. 5 C2H2-type zinc fingers span residues 219–243 (LKCT…LKTH), 249–273 (FICP…MRTH), 279–303 (FMCH…RRIH), 309–333 (FLCE…LVVH), and 339–362 (HQCQ…RKHH). Zn(2+)-binding residues include Cys221, Cys226, His239, His243, Cys251, Cys256, His269, His273, Cys281, Cys286, His299, His303, Cys311, Cys316, His329, His333, Cys341, Cys344, His357, and His361.

In terms of assembly, interacts with CDKN2A/p14ARF. Sumoylated. Sumoylation increases its half-life, possibly by blocking ubiquitin-mediated degradation. In terms of processing, O-glycosylated. O-GlcNAcylation may occur in response to increasing glucose levels and affect transcription factor activity. Widely expressed.

The protein resides in the nucleus. It is found in the chromosome. Transcription factor that binds to the sequence motif 5'-CATCCCATAATA-3', and is specifically required to silence expression of fetal hemoglobin in adult erythroid cells. Prevents expression of fetal hemoglobin genes HBG1 and HBG2 through CHD4: acts as a direct transcriptional activator of CHD4, a central component of the NuRD complex that represses transcription of fetal hemoglobin genes HBG1 and HBG2 in erythroid cells. May also activate transcription of matrix-remodeling genes such as MMP1 during fibroblast senescence. May activate transcription of the gap junction gene GJC1, perhaps in response to increasing glucose. However, recent studies suggest that ZNF410 is dedicated to regulate expression of a single gene: CHD4. In Homo sapiens (Human), this protein is Zinc finger protein 410.